A 450-amino-acid polypeptide reads, in one-letter code: Chromosomal replication initiator protein DnaA (450 aa).

The tract at residues 1–79 (MKDSYFDLNT…MEYAYDVAHD (79 aa)) is domain I, interacts with DnaA modulators. The tract at residues 79 to 112 (DFFKPELKVIKVVANPVNNQKSNQSNSDFVATDY) is domain II. A domain III, AAA+ region region spans residues 113 to 329 (QLNQNFTFDT…GAFNTLTLMA (217 aa)). ATP-binding residues include glycine 157, glycine 159, lysine 160, and threonine 161. Residues 330–450 (RAGRPINVSN…NLSTKIKEKS (121 aa)) are domain IV, binds dsDNA.

It belongs to the DnaA family. Oligomerizes as a right-handed, spiral filament on DNA at oriC.

It is found in the cytoplasm. Its function is as follows. Plays an essential role in the initiation and regulation of chromosomal replication. ATP-DnaA binds to the origin of replication (oriC) to initiate formation of the DNA replication initiation complex once per cell cycle. Binds the DnaA box (a 9 base pair repeat at the origin) and separates the double-stranded (ds)DNA. Forms a right-handed helical filament on oriC DNA; dsDNA binds to the exterior of the filament while single-stranded (ss)DNA is stabiized in the filament's interior. The ATP-DnaA-oriC complex binds and stabilizes one strand of the AT-rich DNA unwinding element (DUE), permitting loading of DNA polymerase. After initiation quickly degrades to an ADP-DnaA complex that is not apt for DNA replication. Binds acidic phospholipids. This Oenococcus oeni (strain ATCC BAA-331 / PSU-1) protein is Chromosomal replication initiator protein DnaA.